The primary structure comprises 544 residues: tRNA pseudouridine synthase 1 (544 aa).

Basic and acidic residues-rich tracts occupy residues 1-10 (MSEENLRPAY) and 31-61 (RKADFDDEKDKKKDNDKHIDKRPKSGPRLDE). The interval 1-74 (MSEENLRPAY…PLPKEPRLPK (74 aa)) is disordered. Asp-134 acts as the Nucleophile in catalysis. Residues 495–544 (IPGLTDAPESNKKIKQRKRMEEEEAASKKAEISSTTQSNEPEVQPEAAAN) form a disordered region. A compositionally biased stretch (basic and acidic residues) spans 513–525 (RMEEEEAASKKAE).

It belongs to the tRNA pseudouridine synthase TruA family. Zn(2+) is required as a cofactor.

Its subcellular location is the nucleus. It carries out the reaction a uridine in tRNA = a pseudouridine in tRNA. The enzyme catalyses uridine in snRNA = pseudouridine in snRNA. The catalysed reaction is a uridine in mRNA = a pseudouridine in mRNA. Formation of pseudouridine at positions 27 and 28 in the anticodon stem and loop of transfer RNAs; at positions 34 and 36 of intron-containing precursor tRNA(Ile) and at position 35 in the intron-containing tRNA(Tyr). Catalyzes pseudouridylation at position 44 in U2 snRNA. Also catalyzes pseudouridylation of mRNAs. This Saccharomyces cerevisiae (strain ATCC 204508 / S288c) (Baker's yeast) protein is tRNA pseudouridine synthase 1 (PUS1).